The primary structure comprises 1414 residues: Phenyloxazoline synthase MbtB (1414 aa).

Positions 5-78 constitute a Carrier 1 domain; sequence TACSEIIRAE…AWSQLVSAGT (74 aa). Serine 39 is subject to O-(pantetheine 4'-phosphoryl)serine. Residues 96 to 394 are condensation/cyclization; it reads EGEPFPLAPM…SSLLLDVDLT (299 aa). Residues 579–975 form an adenylation region; that stretch reads SYAQLRDQAS…RLPGVHAAAA (397 aa). Positions 1057–1135 constitute a Carrier 2 domain; sequence APRTVLQRAL…ALAQLLTGRE (79 aa). Serine 1094 carries the O-(pantetheine 4'-phosphoryl)serine modification. Residues 1188-1413 form a thioesterase region; sequence GAVLVFPHAG…AVARMVSADV (226 aa).

Belongs to the ATP-dependent AMP-binding enzyme family. MbtB subfamily. Requires pantetheine 4'-phosphate as cofactor. Post-translationally, 4'-phosphopantetheine is transferred from CoA to a specific serine in each of the two carrier protein domains, leading to their activation from apo to holo forms.

The protein operates within siderophore biosynthesis; mycobactin biosynthesis. Functionally, involved in the initial steps of the mycobactin biosynthetic pathway. Putatively couples activated salicylic acid with serine or threonine and cyclizes this precursor to the hydroxyphenyloxazoline ring system present in this class of siderophores. The polypeptide is Phenyloxazoline synthase MbtB (mbtB) (Mycobacterium bovis (strain ATCC BAA-935 / AF2122/97)).